The sequence spans 273 residues: Glutamate racemase (273 aa).

Substrate is bound by residues 11–12 and 43–44; these read DS and YG. Cys74 serves as the catalytic Proton donor/acceptor. Substrate is bound at residue 75-76; it reads NT. Cys185 acts as the Proton donor/acceptor in catalysis. A substrate-binding site is contributed by 186–187; sequence TH.

The protein belongs to the aspartate/glutamate racemases family. As to quaternary structure, homodimer.

It carries out the reaction L-glutamate = D-glutamate. It functions in the pathway cell wall biogenesis; peptidoglycan biosynthesis. Provides the (R)-glutamate required for cell wall biosynthesis. The chain is Glutamate racemase from Enterococcus faecalis (strain ATCC 700802 / V583).